Consider the following 110-residue polypeptide: Large ribosomal subunit protein uL22 (110 aa).

The protein belongs to the universal ribosomal protein uL22 family. Part of the 50S ribosomal subunit.

This protein binds specifically to 23S rRNA; its binding is stimulated by other ribosomal proteins, e.g. L4, L17, and L20. It is important during the early stages of 50S assembly. It makes multiple contacts with different domains of the 23S rRNA in the assembled 50S subunit and ribosome. In terms of biological role, the globular domain of the protein is located near the polypeptide exit tunnel on the outside of the subunit, while an extended beta-hairpin is found that lines the wall of the exit tunnel in the center of the 70S ribosome. The protein is Large ribosomal subunit protein uL22 of Vibrio cholerae serotype O1 (strain ATCC 39541 / Classical Ogawa 395 / O395).